The chain runs to 142 residues: MAKKIDAYIKLQVKSGSANPSPPVGPALGQKGVNIMEFCKAFNARTEKMEKGMPIPVVITVYSDRSFTFETKTPPASYLLKTAAGLKSGSPRPNTQKVGTIARAKIQEIAEMKAADMTGADVEAMTRSIEGTARSMGLVVEG.

The protein belongs to the universal ribosomal protein uL11 family. In terms of assembly, part of the ribosomal stalk of the 50S ribosomal subunit. Interacts with L10 and the large rRNA to form the base of the stalk. L10 forms an elongated spine to which L12 dimers bind in a sequential fashion forming a multimeric L10(L12)X complex. One or more lysine residues are methylated.

Functionally, forms part of the ribosomal stalk which helps the ribosome interact with GTP-bound translation factors. The protein is Large ribosomal subunit protein uL11 of Shewanella oneidensis (strain ATCC 700550 / JCM 31522 / CIP 106686 / LMG 19005 / NCIMB 14063 / MR-1).